Reading from the N-terminus, the 230-residue chain is Fibrillarin-like rRNA/tRNA 2'-O-methyltransferase (230 aa).

S-adenosyl-L-methionine contacts are provided by residues 87–88 (TT), 105–106 (EF), 130–131 (DA), and 150–153 (DVAQ).

Belongs to the methyltransferase superfamily. Fibrillarin family. In terms of assembly, interacts with nop5. Component of box C/D small ribonucleoprotein (sRNP) particles that contain rpl7ae, FlpA and nop5, plus a guide RNA.

Functionally, involved in pre-rRNA and tRNA processing. Utilizes the methyl donor S-adenosyl-L-methionine to catalyze the site-specific 2'-hydroxyl methylation of ribose moieties in rRNA and tRNA. Site specificity is provided by a guide RNA that base pairs with the substrate. Methylation occurs at a characteristic distance from the sequence involved in base pairing with the guide RNA. In Methanococcus vannielii (strain ATCC 35089 / DSM 1224 / JCM 13029 / OCM 148 / SB), this protein is Fibrillarin-like rRNA/tRNA 2'-O-methyltransferase.